The following is a 248-amino-acid chain: MKIVENQPVVRRQSPQAEVTLTLPARPEAIAFAPQETALIVVDMQNAYASQGGYLDLAGFDISATAPVIANIKRAISAARAAGIKVIFFQNGWDNQYVEAGGQGSPNWHKSNALKTMRKRPELMGKLLARGDWDYDLVDELQPQAGDIVLPKPRYSGFFNTQLDSLLRSYGIHHLVFTGIATNVCVESTLRDGFFLEYFGIVLADATHQAGPQFAQQAALYNIETFFGWVSDVDSFCNTLAAPLSQTA.

The Proton acceptor role is filled by aspartate 43. Lysine 152 is an active-site residue. Cysteine 185 (nucleophile) is an active-site residue.

This sequence belongs to the isochorismatase family. RutB subfamily.

It catalyses the reaction (Z)-3-ureidoacrylate + H2O + H(+) = (Z)-3-aminoacrylate + NH4(+) + CO2. It carries out the reaction (Z)-3-ureidoacrylate + H2O = (Z)-3-aminoacrylate + carbamate + H(+). The enzyme catalyses (Z)-2-methylureidoacrylate + H2O + H(+) = (Z)-2-methylaminoacrylate + NH4(+) + CO2. Its function is as follows. Hydrolyzes ureidoacrylate to form aminoacrylate and carbamate. The carbamate hydrolyzes spontaneously, thereby releasing one of the nitrogen atoms of the pyrimidine ring as ammonia and one of its carbon atoms as CO2. The chain is Ureidoacrylate amidohydrolase RutB from Serratia proteamaculans (strain 568).